The sequence spans 667 residues: Interleukin-17 receptor E (667 aa).

Positions 1 to 23 are cleaved as a signal peptide; it reads MGSSRLAALLLPLLLIVIDLSDS. The Extracellular segment spans residues 24 to 454; that stretch reads AGIGFRHLPH…LLCPDVSYRH (431 aa). The segment at 126–174 is disordered; sequence LPRRHLSEKSHHISIPSPDISHKGLRSKRTQPSDPETWESLPRLDSQRH. Asn-318, Asn-347, and Asn-364 each carry an N-linked (GlcNAc...) asparagine glycan. A helical membrane pass occupies residues 455–475; it reads LGLLILALLALLTLLGVVLAL. Residues 476–667 lie on the Cytoplasmic side of the membrane; that stretch reads TCRRPQSGPG…REAARLADLG (192 aa). The SEFIR domain occupies 487-624; sequence ARPVLLLHAA…LLRDLPRLLR (138 aa).

Forms heterodimers with IL17RA; the heterodimer binds IL17C. Predominantly expressed in mucosal tissues with high levels in keratinocytes and colon epithelial cells. Very low expression in dermal fibroblasts. Expressed in various tumor cell lines.

The protein resides in the cell membrane. It localises to the cytoplasm. The protein localises to the secreted. Its function is as follows. Specific functional receptor for IL17C. May be signaling through the NF-kappa-B and MAPK pathways. May require TRAF3IP2 /ACT1 for signaling. May be a crucial regulator in innate immunity to bacterial pathogens. Isoform 2 and isoform 4 may be either cytoplasmic inactive or dominant active forms. Isoform 3 and isoform 5 may act as soluble decoy receptors. This is Interleukin-17 receptor E (IL17RE) from Homo sapiens (Human).